The following is a 434-amino-acid chain: Beta-phenylalanine transaminase (434 aa).

Residue arginine 41 coordinates (S)-3-amino-3-phenylpropanoate. Pyridoxal 5'-phosphate is bound at residue 132–133 (GT). N6-(pyridoxal phosphate)lysine is present on lysine 267. Threonine 300 contacts pyridoxal 5'-phosphate.

It belongs to the class-III pyridoxal-phosphate-dependent aminotransferase family. In terms of assembly, homodimer. Pyridoxal 5'-phosphate serves as cofactor.

It catalyses the reaction (S)-3-amino-3-phenylpropanoate + 2-oxoglutarate = 3-oxo-3-phenylpropanoate + L-glutamate. The enzyme catalyses (S)-3-amino-3-phenylpropanoate + pyruvate = 3-oxo-3-phenylpropanoate + L-alanine. With respect to regulation, is inhibited by 2-aminooxyacetate (AOA), a mimic of beta-alanine and a known inhibitor of aminotransferases. Functionally, aminotransferase that acts exclusively on beta-amino acids and exhibits a broad substrate range in vitro, accepting meta-, para- and, to a lesser extent, ortho-substituted beta-phenylalanine derivatives as amino donors, and 2-oxoglutarate or pyruvate as amino acceptors. Is highly enantioselective toward (S)-beta-phenylalanine (is not active with (R)-beta-phenylalanine) and derivatives with different substituents on the phenyl ring, allowing the kinetic resolution of various racemic beta-amino acids to yield (R)-beta-amino acids with &gt;95% enantiomeric excess (ee). Highly prefers aromatic beta-amino acids over aliphatic beta-amino acids; cannot use beta-alanine or beta-glutamate as substrate. Is likely involved in the beta-phenylalanine degradation pathway that allows V.paradoxus strain CBF3 to use beta-phenylalanine as a sole nitrogen source. The chain is Beta-phenylalanine transaminase from Variovorax paradoxus.